The chain runs to 245 residues: Homeobox protein Hox-A4a (245 aa).

Residues 34-99 form a disordered region; that stretch reads DYYERPKDPG…HGPRLTTESC (66 aa). Residues 35–51 are compositionally biased toward basic and acidic residues; that stretch reads YYERPKDPGFPHHEEAS. Composition is skewed to polar residues over residues 53–73 and 82–99; these read PRSNYQEQSYDYGNVSTNDLN and QPQSVSQNHGPRLTTESC. Positions 126–131 match the Antp-type hexapeptide motif; that stretch reads VYPWMK. The homeobox DNA-binding region spans 147–206; it reads PKRSRTAYTRQQALELEKEFHFNRYLTRRRRVEIAHTMCLSERQVKIWFQNRRMKWKKDH. The tract at residues 205–245 is disordered; it reads DHKLPNTKIRSSSSAPSNHHVKTDATQQQQTLLPTPCSSNL. Positions 212 to 221 are enriched in polar residues; it reads KIRSSSSAPS. Residues 230–245 show a composition bias toward low complexity; it reads TQQQQTLLPTPCSSNL.

The protein belongs to the Antp homeobox family. Deformed subfamily.

It is found in the nucleus. Functionally, sequence-specific transcription factor which is part of a developmental regulatory system that provides cells with specific positional identities on the anterior-posterior axis. The polypeptide is Homeobox protein Hox-A4a (hoxa4a) (Danio rerio (Zebrafish)).